The primary structure comprises 179 residues: Cytoglobin-2 (179 aa).

The span at 1–11 (MEKEREDEETE) shows a compositional bias: acidic residues. A disordered region spans residues 1–20 (MEKEREDEETEGRERPEPLT). One can recognise a Globin domain in the interval 18-167 (PLTDVERGII…LYWHITGAYT (150 aa)). Residues His81 and His113 each coordinate heme b.

The protein belongs to the globin family. In terms of assembly, monomeric. In terms of tissue distribution, expressed in all tissues examined, with highest levels in brain and eye, and considerably lower levels in skin, gut, heart, gill, liver and muscle.

The protein localises to the cytoplasm. The protein resides in the nucleus. The enzyme catalyses Fe(II)-heme b-[protein] + nitric oxide + O2 = Fe(III)-heme b-[protein] + nitrate. It catalyses the reaction Fe(III)-heme b-[protein] + nitric oxide + H2O = Fe(II)-heme b-[protein] + nitrite + 2 H(+). The catalysed reaction is 2 superoxide + 2 H(+) = H2O2 + O2. It carries out the reaction H2O2 + AH2 = A + 2 H2O. Probable multifunctional globin with a hexacoordinated heme iron required for the catalysis of various reactions depending on redox condition of the cell as well as oxygen availability. Has a nitric oxide dioxygenase (NOD) activity and is most probably involved in cell-mediated and oxygen-dependent nitric oxide consumption. Under normoxic conditions functions as a nitric oxide dioxygenase (NOD) but under hypoxic conditions the globin may switch its function to that of a nitrite (NO2) reductase (NiR), generating nitric oxide. Could also have peroxidase and superoxide dismutase activities, detoxifying reactive oxygen species and protecting cells against oxidative stress. Also binds dioxygen with low affinity and could function as an oxygen sensor but has probably no function as a respiratory oxygen carrier. The sequence is that of Cytoglobin-2 from Danio rerio (Zebrafish).